Reading from the N-terminus, the 338-residue chain is LINE-1 retrotransposable element ORF1 protein (338 aa).

The disordered stretch occupies residues 1 to 40 (MGKKQNRKTGNSKTQSASPPPKERSSSPATEQSWMENDFD). 2 stretches are compositionally biased toward polar residues: residues 8–17 (KTGNSKTQSA) and 26–35 (SSPATEQSWM). The stretch at 49-153 (RSNYSELRED…QSLQEIWDYV (105 aa)) forms a coiled coil. Residues 157–252 (NLRLIGVPES…KGKPIRLTAD (96 aa)) are RNA recognition motif (RRM) domain. The interval 253–317 (LSAETLQARR…TTRPALKELL (65 aa)) is C-terminal domain (CTD).

This sequence belongs to the transposase 22 family. In terms of assembly, homotrimer (via coiled coil domain). May also form larger homooligomers. May interact with DDX39A, HNRNPA1, SERBP1 and YBX1. Interacts with TEX19 and UBR2. Interacts with MOV10. Interacts with APOBEC3D; this interaction inhibits LINE-1 retrotransposition. Post-translationally, polyubiquitinated, probably by UBR2, which induces its degradation.

The protein localises to the nucleus. Its subcellular location is the nucleolus. It localises to the cytoplasm. The protein resides in the cytoplasmic ribonucleoprotein granule. It is found in the stress granule. In terms of biological role, nucleic acid-binding protein which is essential for retrotransposition of LINE-1 elements in the genome. Functions as a nucleic acid chaperone binding its own transcript and therefore preferentially mobilizing the transcript from which they are encoded. The polypeptide is LINE-1 retrotransposable element ORF1 protein (L1RE1) (Homo sapiens (Human)).